Reading from the N-terminus, the 327-residue chain is L-lactate dehydrogenase (327 aa).

Residues valine 18, aspartate 39, lysine 44, tyrosine 69, and glycine 83 to alanine 84 each bind NAD(+). Substrate is bound by residues glutamine 86, arginine 92, and asparagine 124 to aspartate 127. Residues alanine 122–asparagine 124 and serine 147 contribute to the NAD(+) site. Aspartate 152 to arginine 155 contributes to the substrate binding site. Residues arginine 157 and histidine 172 each contribute to the beta-D-fructose 1,6-bisphosphate site. Histidine 179 (proton acceptor) is an active-site residue. A Phosphotyrosine modification is found at tyrosine 224. Residue threonine 233 coordinates substrate.

It belongs to the LDH/MDH superfamily. LDH family. As to quaternary structure, homotetramer.

The protein resides in the cytoplasm. It carries out the reaction (S)-lactate + NAD(+) = pyruvate + NADH + H(+). The protein operates within fermentation; pyruvate fermentation to lactate; (S)-lactate from pyruvate: step 1/1. Allosterically activated by fructose 1,6-bisphosphate (FBP). Its function is as follows. Catalyzes the conversion of lactate to pyruvate. The polypeptide is L-lactate dehydrogenase (Streptococcus uberis (strain ATCC BAA-854 / 0140J)).